The sequence spans 163 residues: Nucleotide-binding protein LBJ_2391 (163 aa).

Belongs to the YajQ family.

In terms of biological role, nucleotide-binding protein. This chain is Nucleotide-binding protein LBJ_2391, found in Leptospira borgpetersenii serovar Hardjo-bovis (strain JB197).